The chain runs to 154 residues: Myoglobin (154 aa).

The Globin domain maps to 2–148; the sequence is GLSDGEWQLV…FRNDIAAKYK (147 aa). Phosphoserine is present on S4. Residue H65 participates in nitrite binding. Residue H65 coordinates O2. Residue T68 is modified to Phosphothreonine. H94 serves as a coordination point for heme b.

This sequence belongs to the globin family. As to quaternary structure, monomeric.

Its subcellular location is the cytoplasm. The protein resides in the sarcoplasm. It carries out the reaction Fe(III)-heme b-[protein] + nitric oxide + H2O = Fe(II)-heme b-[protein] + nitrite + 2 H(+). The catalysed reaction is H2O2 + AH2 = A + 2 H2O. In terms of biological role, monomeric heme protein which primary function is to store oxygen and facilitate its diffusion within muscle tissues. Reversibly binds oxygen through a pentacoordinated heme iron and enables its timely and efficient release as needed during periods of heightened demand. Depending on the oxidative conditions of tissues and cells, and in addition to its ability to bind oxygen, it also has a nitrite reductase activity whereby it regulates the production of bioactive nitric oxide. Under stress conditions, like hypoxia and anoxia, it also protects cells against reactive oxygen species thanks to its pseudoperoxidase activity. This is Myoglobin (MB) from Lutra lutra (European river otter).